The following is a 160-amino-acid chain: 2-C-methyl-D-erythritol 2,4-cyclodiphosphate synthase (160 aa).

A divalent metal cation-binding residues include D11 and H13. 4-CDP-2-C-methyl-D-erythritol 2-phosphate contacts are provided by residues 11-13 (DVH) and 37-38 (HS). H45 is an a divalent metal cation binding site. 4-CDP-2-C-methyl-D-erythritol 2-phosphate-binding positions include 59 to 61 (DIG) and R145.

Belongs to the IspF family. Homotrimer. It depends on a divalent metal cation as a cofactor.

The catalysed reaction is 4-CDP-2-C-methyl-D-erythritol 2-phosphate = 2-C-methyl-D-erythritol 2,4-cyclic diphosphate + CMP. It functions in the pathway isoprenoid biosynthesis; isopentenyl diphosphate biosynthesis via DXP pathway; isopentenyl diphosphate from 1-deoxy-D-xylulose 5-phosphate: step 4/6. Functionally, involved in the biosynthesis of isopentenyl diphosphate (IPP) and dimethylallyl diphosphate (DMAPP), two major building blocks of isoprenoid compounds. Catalyzes the conversion of 4-diphosphocytidyl-2-C-methyl-D-erythritol 2-phosphate (CDP-ME2P) to 2-C-methyl-D-erythritol 2,4-cyclodiphosphate (ME-CPP) with a corresponding release of cytidine 5-monophosphate (CMP). The chain is 2-C-methyl-D-erythritol 2,4-cyclodiphosphate synthase from Neisseria meningitidis serogroup B (strain ATCC BAA-335 / MC58).